Reading from the N-terminus, the 780-residue chain is Reticulon-1 (780 aa).

Disordered regions lie at residues 1 to 76 (MAAP…VAME), 128 to 176 (QKEN…AEST), 201 to 223 (RPQEAKGQEEQHPGLEDKDLDFK), and 293 to 576 (MTAT…IPGP). Residues serine 13 and serine 70 each carry the phosphoserine modification. Serine 327 is subject to Phosphoserine. The segment covering 328-341 (PGSVTPPSSGTEPS) has biased composition (low complexity). Residues serine 350, serine 352, and serine 487 each carry the phosphoserine modification. The segment covering 497-512 (AIREETGSRATEERAP) has biased composition (basic and acidic residues). The Reticulon domain maps to 593 to 780 (AIDLLYWRDI…KIPGAKRHAE (188 aa)). Transmembrane regions (helical) follow at residues 607–627 (IVFGSFLLLLFSLTQFSVVSV) and 709–729 (FAVLMWLLTYVGALFNGLTLL).

In terms of assembly, interacts with NDRG1. Interacts with BACE1. Interacts with TMEM33.

Its subcellular location is the endoplasmic reticulum membrane. The protein resides in the golgi apparatus membrane. Functionally, inhibits amyloid precursor protein processing, probably by blocking BACE1 activity. In Mus musculus (Mouse), this protein is Reticulon-1 (Rtn1).